Here is a 347-residue protein sequence, read N- to C-terminus: Probable inactive UDP-arabinopyranose mutase 2 (347 aa).

Residue R145 is glycosylated (N-linked (Glc...) arginine).

It belongs to the RGP family. As to quaternary structure, heteromers with UAM1 and UAM3. Is not reversibly glycosylated in vitro by UDP-glucose, UDP-xylose and UDP-galactose.

The protein resides in the golgi apparatus. Functionally, probable inactive UDP-L-arabinose mutase. Inactive in vitro, but associates with UAM1 and UAM3. The protein is Probable inactive UDP-arabinopyranose mutase 2 of Oryza sativa subsp. japonica (Rice).